The primary structure comprises 106 residues: uncharacterized protein (106 aa).

The first 31 residues, 1-31 (MNNERLMLKGIFLGAAAGAALSLLHKPTRQA), serve as a signal peptide directing secretion. Residues 57-89 (VITKVDEAKKLARTLSKEVDFVNQQVKELKKTT) are a coiled coil.

This is an uncharacterized protein from Bacillus subtilis (strain 168).